Consider the following 157-residue polypeptide: Small ribosomal subunit protein uS7 (157 aa).

This sequence belongs to the universal ribosomal protein uS7 family. In terms of assembly, part of the 30S ribosomal subunit. Contacts proteins S9 and S11.

Its function is as follows. One of the primary rRNA binding proteins, it binds directly to 16S rRNA where it nucleates assembly of the head domain of the 30S subunit. Is located at the subunit interface close to the decoding center, probably blocks exit of the E-site tRNA. This Francisella tularensis subsp. tularensis (strain FSC 198) protein is Small ribosomal subunit protein uS7.